The primary structure comprises 250 residues: NAD-dependent protein deacylase (250 aa).

In terms of domain architecture, Deacetylase sirtuin-type spans 1–248; it reads MLGEVSKILA…PKLVEEIRRI (248 aa). 20 to 39 lines the NAD(+) pocket; the sequence is GAGISAESGIPTFRGKDGLW. Substrate contacts are provided by Y64 and R67. An NAD(+)-binding site is contributed by 98–101; it reads QNVD. H116 functions as the Proton acceptor in the catalytic mechanism. 4 residues coordinate Zn(2+): C124, C127, C150, and C153. NAD(+) contacts are provided by residues 190 to 192, 216 to 218, and A234; these read GTS and NIE.

The protein belongs to the sirtuin family. Class III subfamily. The cofactor is Zn(2+).

It is found in the cytoplasm. It carries out the reaction N(6)-acetyl-L-lysyl-[protein] + NAD(+) + H2O = 2''-O-acetyl-ADP-D-ribose + nicotinamide + L-lysyl-[protein]. The enzyme catalyses N(6)-succinyl-L-lysyl-[protein] + NAD(+) + H2O = 2''-O-succinyl-ADP-D-ribose + nicotinamide + L-lysyl-[protein]. Its function is as follows. NAD-dependent lysine deacetylase and desuccinylase that specifically removes acetyl and succinyl groups on target proteins. Modulates the activities of several proteins which are inactive in their acylated form. Deacetylates the N-terminal lysine residue of Alba, the major archaeal chromatin protein and that, in turn, increases Alba's DNA binding affinity, thereby repressing transcription. This chain is NAD-dependent protein deacylase, found in Pyrococcus furiosus (strain ATCC 43587 / DSM 3638 / JCM 8422 / Vc1).